The sequence spans 451 residues: MNTNNRHYHITTFGCQMNKADSERMAGILDNMGLISSEDPNKADIILYNTCTIRDNAEQKVYSYLGRQAKRKHKQPDLTLIVAGCVAQQEGAALLRRVPELDLIMGPQHANRLQDLLEQVFNGNQVVATEPIHIVEDITKPRRDSKITAWVNIIYGCNEHCTYCVVPSVRGVEQSRTPEAIRAEMEELGRQGYQEITLLGQNIDAYGRDLPGVTKEGRNKYTFTDLLYYVHDVPGVERIRFATSHPRYFTERLIRACAELPKVCEHFHIPFQSGDNKLLKAMARGYTHEKYRRIIDKIRELMPDASISADAIVGFPGETEAQFENTLKLVEDIGFDQLNTAAYSPRPGTPAALWENQLGEEVKSDRLQRLNHLVGVKAADRSQRYMGRIEEVLVEDMNPKNAAQVMGRTRGNRLTFFEGDIAQLKGKLVKVKITEVRPFSLTGEVKEFVLV.

One can recognise an MTTase N-terminal domain in the interval 6–122 (RHYHITTFGC…LQDLLEQVFN (117 aa)). Residues Cys-15, Cys-51, Cys-85, Cys-157, Cys-161, and Cys-164 each contribute to the [4Fe-4S] cluster site. A Radical SAM core domain is found at 143–380 (RDSKITAWVN…NHLVGVKAAD (238 aa)). The 65-residue stretch at 383–447 (QRYMGRIEEV…PFSLTGEVKE (65 aa)) folds into the TRAM domain.

It belongs to the methylthiotransferase family. MiaB subfamily. Monomer. [4Fe-4S] cluster serves as cofactor.

The protein localises to the cytoplasm. The catalysed reaction is N(6)-dimethylallyladenosine(37) in tRNA + (sulfur carrier)-SH + AH2 + 2 S-adenosyl-L-methionine = 2-methylsulfanyl-N(6)-dimethylallyladenosine(37) in tRNA + (sulfur carrier)-H + 5'-deoxyadenosine + L-methionine + A + S-adenosyl-L-homocysteine + 2 H(+). In terms of biological role, catalyzes the methylthiolation of N6-(dimethylallyl)adenosine (i(6)A), leading to the formation of 2-methylthio-N6-(dimethylallyl)adenosine (ms(2)i(6)A) at position 37 in tRNAs that read codons beginning with uridine. The polypeptide is tRNA-2-methylthio-N(6)-dimethylallyladenosine synthase (Trichodesmium erythraeum (strain IMS101)).